The following is a 127-amino-acid chain: Fumarate reductase subunit C (127 aa).

The next 3 helical transmembrane spans lie at 30–50, 67–87, and 107–127; these read ATILPLIFFTICLLVGLGSLV, IVVALNIVALAGSLFHAQTFF, and VVVLAQWAAVAAITLLVLVIV.

It belongs to the FrdC family. In terms of assembly, part of an enzyme complex containing four subunits: a flavoprotein (FrdA), an iron-sulfur protein (FrdB), and two hydrophobic anchor proteins (FrdC and FrdD).

It localises to the cell inner membrane. Functionally, anchors the catalytic components of the fumarate reductase complex to the cell membrane, binds quinones. The protein is Fumarate reductase subunit C of Aliivibrio salmonicida (strain LFI1238) (Vibrio salmonicida (strain LFI1238)).